Reading from the N-terminus, the 137-residue chain is Proofreading thioesterase EntH (137 aa).

Catalysis depends on glutamate 63, which acts as the Nucleophile or proton acceptor.

The protein belongs to the thioesterase PaaI family. In terms of assembly, homotetramer. Dimer of dimers. Interacts specifically with the aryl carrier protein (ArCP) domain of EntB.

It localises to the cytoplasm. It participates in siderophore biosynthesis; enterobactin biosynthesis. Functionally, required for optimal enterobactin synthesis. Acts as a proofreading enzyme that prevents EntB misacylation by hydrolyzing the thioester bound existing between EntB and wrongly charged molecules. The chain is Proofreading thioesterase EntH from Salmonella paratyphi A (strain AKU_12601).